The following is a 308-amino-acid chain: MNLRKNVIRSVLRGARPLFASRRLGIAGRRVLLATLTAGARAPKGTRFQRVSIAGVPVQRVQPPHAATSGTLIYLHGGAYALGSARGYRGLAAQLAAAAGMTALVPDYTRAPHAHYPVALEEMAAVYTRLLDDGLDPKTTVIAGDSAGGGLTLALAMALRDRGIQAPAALGLICPWADLAVDIEATRPALRDPLILPSMCTEWAPRYVGSSDPRLPGISPVYGDMSGLPPIVMQTAGDDPICVDADKIETACAASKTSIEHRRFAGMWHDFHLQVSLLPEARDAIADLGARLRGHLHQSQGQPRGVVK.

A signal peptide spans 1–40; it reads MNLRKNVIRSVLRGARPLFASRRLGIAGRRVLLATLTAGA. The Involved in the stabilization of the negatively charged intermediate by the formation of the oxyanion hole signature appears at 76–78; it reads HGG. Catalysis depends on residues Ser-146, Asp-239, and His-269.

It belongs to the 'GDXG' lipolytic enzyme family.

Required for maintaining the appropriate mycolic acid composition and permeability of the envelope on its exposure to acidic pH. The polypeptide is Putative acetyl-hydrolase LipR (lipR) (Mycobacterium tuberculosis (strain ATCC 25618 / H37Rv)).